A 60-amino-acid chain; its full sequence is UPF0434 protein Ent638_1436 (60 aa).

This sequence belongs to the UPF0434 family.

The sequence is that of UPF0434 protein Ent638_1436 from Enterobacter sp. (strain 638).